The sequence spans 447 residues: Ribulose bisphosphate carboxylase large chain (447 aa).

Lys5 is modified (N6,N6,N6-trimethyllysine). Substrate is bound by residues Asn114 and Thr164. The active-site Proton acceptor is the Lys166. Lys168 lines the substrate pocket. Mg(2+) is bound by residues Lys192, Asp194, and Glu195. An N6-carboxylysine modification is found at Lys192. The Proton acceptor role is filled by His285. Substrate-binding residues include Arg286, His318, and Ser370.

This sequence belongs to the RuBisCO large chain family. Type I subfamily. Heterohexadecamer of 8 large chains and 8 small chains; disulfide-linked. The disulfide link is formed within the large subunit homodimers. Mg(2+) is required as a cofactor. In terms of processing, the disulfide bond which can form in the large chain dimeric partners within the hexadecamer appears to be associated with oxidative stress and protein turnover.

The protein localises to the plastid. Its subcellular location is the chloroplast. The catalysed reaction is 2 (2R)-3-phosphoglycerate + 2 H(+) = D-ribulose 1,5-bisphosphate + CO2 + H2O. The enzyme catalyses D-ribulose 1,5-bisphosphate + O2 = 2-phosphoglycolate + (2R)-3-phosphoglycerate + 2 H(+). Its function is as follows. RuBisCO catalyzes two reactions: the carboxylation of D-ribulose 1,5-bisphosphate, the primary event in carbon dioxide fixation, as well as the oxidative fragmentation of the pentose substrate in the photorespiration process. Both reactions occur simultaneously and in competition at the same active site. This chain is Ribulose bisphosphate carboxylase large chain, found in Camassia leichtlinii (Western quamash).